Consider the following 437-residue polypeptide: Ribosomal protein uS12 methylthiotransferase RimO (437 aa).

An MTTase N-terminal domain is found at 4–114 (PRIGFISLGC…VMNAVHEHLP (111 aa)). [4Fe-4S] cluster contacts are provided by Cys13, Cys49, Cys78, Cys145, Cys149, and Cys152. Residues 131 to 368 (LTPRHYAYLK…MEVQERISAA (238 aa)) enclose the Radical SAM core domain. The 67-residue stretch at 371–437 (RTRIGRTETV…AHDLWARLAD (67 aa)) folds into the TRAM domain.

This sequence belongs to the methylthiotransferase family. RimO subfamily. Requires [4Fe-4S] cluster as cofactor.

The protein resides in the cytoplasm. The enzyme catalyses L-aspartate(89)-[ribosomal protein uS12]-hydrogen + (sulfur carrier)-SH + AH2 + 2 S-adenosyl-L-methionine = 3-methylsulfanyl-L-aspartate(89)-[ribosomal protein uS12]-hydrogen + (sulfur carrier)-H + 5'-deoxyadenosine + L-methionine + A + S-adenosyl-L-homocysteine + 2 H(+). Functionally, catalyzes the methylthiolation of an aspartic acid residue of ribosomal protein uS12. The polypeptide is Ribosomal protein uS12 methylthiotransferase RimO (Methylococcus capsulatus (strain ATCC 33009 / NCIMB 11132 / Bath)).